The following is a 431-amino-acid chain: Aspartokinase (431 aa).

It belongs to the aspartokinase family.

It catalyses the reaction L-aspartate + ATP = 4-phospho-L-aspartate + ADP. Its pathway is amino-acid biosynthesis; L-lysine biosynthesis via DAP pathway; (S)-tetrahydrodipicolinate from L-aspartate: step 1/4. The protein operates within amino-acid biosynthesis; L-methionine biosynthesis via de novo pathway; L-homoserine from L-aspartate: step 1/3. It participates in amino-acid biosynthesis; L-threonine biosynthesis; L-threonine from L-aspartate: step 1/5. The chain is Aspartokinase (lysC) from Chlamydia trachomatis serovar D (strain ATCC VR-885 / DSM 19411 / UW-3/Cx).